Here is a 292-residue protein sequence, read N- to C-terminus: Small ribosomal subunit biogenesis GTPase RsgA (292 aa).

The CP-type G domain occupies 64–221 (RSELFRPAVA…LVDTPGFSSL (158 aa)). GTP is bound by residues 113 to 116 (NKMD) and 164 to 172 (GPSGVGKST). The Zn(2+) site is built by cysteine 245, cysteine 250, histidine 252, and cysteine 258.

Belongs to the TRAFAC class YlqF/YawG GTPase family. RsgA subfamily. As to quaternary structure, monomer. Associates with 30S ribosomal subunit, binds 16S rRNA. The cofactor is Zn(2+).

The protein localises to the cytoplasm. In terms of biological role, one of several proteins that assist in the late maturation steps of the functional core of the 30S ribosomal subunit. Helps release RbfA from mature subunits. May play a role in the assembly of ribosomal proteins into the subunit. Circularly permuted GTPase that catalyzes slow GTP hydrolysis, GTPase activity is stimulated by the 30S ribosomal subunit. This Clostridium botulinum (strain 657 / Type Ba4) protein is Small ribosomal subunit biogenesis GTPase RsgA.